Reading from the N-terminus, the 303-residue chain is Glycine--tRNA ligase alpha subunit (303 aa).

Belongs to the class-II aminoacyl-tRNA synthetase family. In terms of assembly, tetramer of two alpha and two beta subunits.

The protein resides in the cytoplasm. It carries out the reaction tRNA(Gly) + glycine + ATP = glycyl-tRNA(Gly) + AMP + diphosphate. This chain is Glycine--tRNA ligase alpha subunit, found in Salmonella agona (strain SL483).